Consider the following 177-residue polypeptide: Copper-binding regulatory protein cuf2 (177 aa).

The copper-fist DNA-binding region spans 1–40 (MIIIDGKNYACVVCLRGHRGSSCQHQERALIEVRTRGRPL). Zn(2+) contacts are provided by C11, C14, C23, and H25.

It is found in the nucleus. This chain is Copper-binding regulatory protein cuf2 (cuf2), found in Schizosaccharomyces pombe (strain 972 / ATCC 24843) (Fission yeast).